A 48-amino-acid polypeptide reads, in one-letter code: Sperm protamine P1 (48 aa).

The protein belongs to the protamine P1 family. In terms of tissue distribution, testis.

The protein localises to the nucleus. It is found in the chromosome. Its function is as follows. Protamines substitute for histones in the chromatin of sperm during the haploid phase of spermatogenesis. They compact sperm DNA into a highly condensed, stable and inactive complex. The protein is Sperm protamine P1 (PRM1) of Murina cyclotis (Round-eared tube-nosed bat).